A 310-amino-acid chain; its full sequence is Mitochondrial citrate transporter E (310 aa).

Solcar repeat units follow at residues 2 to 95 (STTT…LRQG), 107 to 199 (QSLG…AKRR), and 208 to 293 (DGPG…TNKI). 6 helical membrane-spanning segments follow: residues 8–28 (FIAGGVAACGAVTVTHSFETV), 72–92 (GSAYIYQVLLNGCRLGFYEPL), 114–133 (LAGAASGIIGAAAGSPFFLV), 178–198 (AMVRTGFGSSVQLPTYFFAKR), 211–228 (GLHLASSTASGFVVCCVM), and 265–286 (IYKGYFAHLARILPHTILTLSL).

This sequence belongs to the mitochondrial carrier (TC 2.A.29) family.

Its subcellular location is the mitochondrion inner membrane. Functionally, mitochondrial transporter that does not mediate citrate export from mitochondria to cytoplasm. Its exact function has still to be determined. This is Mitochondrial citrate transporter E from Aspergillus niger (strain ATCC 1015 / CBS 113.46 / FGSC A1144 / LSHB Ac4 / NCTC 3858a / NRRL 328 / USDA 3528.7).